The sequence spans 617 residues: MQNKYPLLSQIDSPEDLRLLGKEDLSALANELRTYLLDSVSQTSGHLASGLGVVELTVALHYVYQTPFDQLIWDVGHQAYPHKILTGRRDQMHTIRQKNGIHPFPWREESPYDVLSVGHSSTSISAGLGIAVAAQKENAGRKTVCVIGDGAITAGMAFEAMNHAGALHTDMLVILNDNEMSISENVGALNNHLARIFSGSLYTSMRDGSKKVLDKVPTIKNFMKKSEEHMKGVIFSPDSTLFEELGFNYIGPIDGHNIEELVKTLTNMRELKGPQFLHVRTKKGKGYEPAENDPISYHGVPRFDPASGKLPQSKIVPTYSDIFGNWLCEMAENDEKIIGITPAMREGSGMVEFSKRFPTQYFDVAIAEQHAVTFAAGLAIAGYKPVVAIYSTFLQRAYDQLIHDIAIQNLPVIFAIDRAGVVGADGQTHQGAFDLSFMRCIPNMTIMCPADENEMHQMLYTAYKMQTPTAIRYPRGNARGIALQPMAELAVGKARIIHQGKKVAILNFGALLSEAQEVAISHNYTLVDMRFVKPLDKTLISELADSHSLLVTLEENAIQGGAGSAVNEYLQQIGKIKPLVLIGLPDMFIPQSTQQESYADFGLDAKGIDQKIKLALS.

Residues His77 and 118 to 120 (GHS) contribute to the thiamine diphosphate site. Asp149 is a binding site for Mg(2+). Thiamine diphosphate contacts are provided by residues 150-151 (GA), Asn178, Tyr287, and Glu368. Asn178 serves as a coordination point for Mg(2+).

This sequence belongs to the transketolase family. DXPS subfamily. As to quaternary structure, homodimer. Requires Mg(2+) as cofactor. Thiamine diphosphate serves as cofactor.

The catalysed reaction is D-glyceraldehyde 3-phosphate + pyruvate + H(+) = 1-deoxy-D-xylulose 5-phosphate + CO2. It functions in the pathway metabolic intermediate biosynthesis; 1-deoxy-D-xylulose 5-phosphate biosynthesis; 1-deoxy-D-xylulose 5-phosphate from D-glyceraldehyde 3-phosphate and pyruvate: step 1/1. Its function is as follows. Catalyzes the acyloin condensation reaction between C atoms 2 and 3 of pyruvate and glyceraldehyde 3-phosphate to yield 1-deoxy-D-xylulose-5-phosphate (DXP). The protein is 1-deoxy-D-xylulose-5-phosphate synthase of Haemophilus ducreyi (strain 35000HP / ATCC 700724).